A 600-amino-acid polypeptide reads, in one-letter code: Dihydroxy-acid dehydratase (600 aa).

Asp-82 contributes to the Mg(2+) binding site. Cys-123 is a binding site for [2Fe-2S] cluster. Mg(2+)-binding residues include Asp-124 and Lys-125. Lys-125 carries the post-translational modification N6-carboxylysine. Cys-192 serves as a coordination point for [2Fe-2S] cluster. Glu-489 contributes to the Mg(2+) binding site. Ser-515 acts as the Proton acceptor in catalysis.

It belongs to the IlvD/Edd family. As to quaternary structure, homodimer. Requires [2Fe-2S] cluster as cofactor. It depends on Mg(2+) as a cofactor.

It catalyses the reaction (2R)-2,3-dihydroxy-3-methylbutanoate = 3-methyl-2-oxobutanoate + H2O. The catalysed reaction is (2R,3R)-2,3-dihydroxy-3-methylpentanoate = (S)-3-methyl-2-oxopentanoate + H2O. The protein operates within amino-acid biosynthesis; L-isoleucine biosynthesis; L-isoleucine from 2-oxobutanoate: step 3/4. Its pathway is amino-acid biosynthesis; L-valine biosynthesis; L-valine from pyruvate: step 3/4. Functions in the biosynthesis of branched-chain amino acids. Catalyzes the dehydration of (2R,3R)-2,3-dihydroxy-3-methylpentanoate (2,3-dihydroxy-3-methylvalerate) into 2-oxo-3-methylpentanoate (2-oxo-3-methylvalerate) and of (2R)-2,3-dihydroxy-3-methylbutanoate (2,3-dihydroxyisovalerate) into 2-oxo-3-methylbutanoate (2-oxoisovalerate), the penultimate precursor to L-isoleucine and L-valine, respectively. The protein is Dihydroxy-acid dehydratase of Bacteroides thetaiotaomicron (strain ATCC 29148 / DSM 2079 / JCM 5827 / CCUG 10774 / NCTC 10582 / VPI-5482 / E50).